We begin with the raw amino-acid sequence, 379 residues long: uncharacterized protein (379 aa).

This is an uncharacterized protein from Sinorhizobium fredii (strain NBRC 101917 / NGR234).